The sequence spans 476 residues: MNFETTIGLEVHVELKTKSKMFSPSPVTYGQEPNTQTNVIDWGFPGVLPSINRGAYQLGIMVGLALHADITRLTHFDRKNYFYPDNPKAYQITQSEKPLGTNGWVEIEVDGKKKKIGIAELHVEEDAGKNQHEDDGYSYVDLNRQGTPLVEIVSKPDITSPEEAYAYLETLRQIVQFTGASDVKMEEGSMRVDTNLSVRPIGQEHFGTKTEIKNLNSFVHVRDGLAFEEKRQQAVLLSGGEVRQETRRWDPDAKETLLMRVKEGADDYRYFPEPDLPPVAVSQKWIDDIQASLPQPPAERRQRYIEDWGIPAYDAGVLTQTKEMSDFFEATVAQGADAKQASNWLMGEVSGFLNAQHVELGQVALTPAHLAGMIKLIGDGTISSKMAKKVFKEIIQHDTDPDKWVHEKGLIQLSDPAKLTPIIDEILDNNQQSIDDFKAGKDRAIGFLVGQIMKQTHGQANPKVVNQILMAEIKQR.

This sequence belongs to the GatB/GatE family. GatB subfamily. As to quaternary structure, heterotrimer of A, B and C subunits.

It carries out the reaction L-glutamyl-tRNA(Gln) + L-glutamine + ATP + H2O = L-glutaminyl-tRNA(Gln) + L-glutamate + ADP + phosphate + H(+). It catalyses the reaction L-aspartyl-tRNA(Asn) + L-glutamine + ATP + H2O = L-asparaginyl-tRNA(Asn) + L-glutamate + ADP + phosphate + 2 H(+). Its function is as follows. Allows the formation of correctly charged Asn-tRNA(Asn) or Gln-tRNA(Gln) through the transamidation of misacylated Asp-tRNA(Asn) or Glu-tRNA(Gln) in organisms which lack either or both of asparaginyl-tRNA or glutaminyl-tRNA synthetases. The reaction takes place in the presence of glutamine and ATP through an activated phospho-Asp-tRNA(Asn) or phospho-Glu-tRNA(Gln). The sequence is that of Aspartyl/glutamyl-tRNA(Asn/Gln) amidotransferase subunit B from Lacticaseibacillus casei (strain BL23) (Lactobacillus casei).